The chain runs to 202 residues: Glycerol-3-phosphate acyltransferase (202 aa).

The next 6 membrane-spanning stretches (helical) occupy residues 2–22, 54–74, 85–105, 120–140, 141–161, and 162–182; these read MIIV…GFVI, FLVT…PLWL, FFTN…YPVY, VVLG…FIVL, KIFK…VIGS, and LIIQ…ILII.

It belongs to the PlsY family. As to quaternary structure, probably interacts with PlsX.

The protein resides in the cell membrane. It carries out the reaction an acyl phosphate + sn-glycerol 3-phosphate = a 1-acyl-sn-glycero-3-phosphate + phosphate. It functions in the pathway lipid metabolism; phospholipid metabolism. Catalyzes the transfer of an acyl group from acyl-phosphate (acyl-PO(4)) to glycerol-3-phosphate (G3P) to form lysophosphatidic acid (LPA). This enzyme utilizes acyl-phosphate as fatty acyl donor, but not acyl-CoA or acyl-ACP. The sequence is that of Glycerol-3-phosphate acyltransferase from Staphylococcus aureus (strain Mu3 / ATCC 700698).